Reading from the N-terminus, the 317-residue chain is Protein phosphatase PTC7 homolog fig (317 aa).

The region spanning 46 to 312 (PYLVTVVQGR…DDITLILASV (267 aa)) is the PPM-type phosphatase domain. Mn(2+) contacts are provided by aspartate 90, glycine 91, and aspartate 235.

It belongs to the PP2C family. Mg(2+) serves as cofactor. It depends on Mn(2+) as a cofactor.

The catalysed reaction is O-phospho-L-seryl-[protein] + H2O = L-seryl-[protein] + phosphate. It carries out the reaction O-phospho-L-threonyl-[protein] + H2O = L-threonyl-[protein] + phosphate. The polypeptide is Protein phosphatase PTC7 homolog fig (Drosophila erecta (Fruit fly)).